The following is an 883-amino-acid chain: MSKELSSKYNPAEVEAGRYQKWLDADVFKPSGDQKAKPYSIVIPPPNVTGKLHLGHAWDTTLQDIIIRQKRMQGFDTLWLPGMDHAGIATQAKVEERLRGEGISRYDLGRESFLTKVWEWKDEYATTIKEQWGKMGLSVDYSRERFTLDEGLSKAVRKVFVDLYKKGWIYRGEFIINWDPAARTALSDIEVIHKDVEGAFYHMNYMLEDGSRALEVATTRPETMFGDVAIAVNPEDPRYKDLIGKNVILPIANKLIPIVGDEHADPEFGTGVVKITPAHDPNDFLVGQRHNLPQVNIMNDDGTMNELVFEFSGMDRFEARKAVVAKLEEIGALVKIEKRVHSVGHSERTGVVVEPRLSTQWFVKMDQLAKNAIANQDTEDKVEFYPPRFNDTFLQWMENVHDWVISRQLWWGHQIPAWYNADGEMYVGEEAPEGDGWTQDEDVLDTWFSSALWPFSTMGWPEVDSEDFKRYFPTSTLVTGYDIIFFWVSRMIFQSLEFTGRQPFQNVLIHGLIRDEQGRKMSKSLGNGIDPMDVIEKYGADALRWFLSNGSAPGQDVRFSYEKMDASWNFINKIWNISRYILMNNGGLTLDVAHDNVTKVATGEAGNVTDRWILHNLNETIAKVTENFDKFEFGVAGHILYNFIWEEFANWYVELTKEVLYSDNEDDKVITRSVLLYTLDKILRLLHSIMPFVTEEIFGQYAEGSIVTAAYPTVNPAFEDLAAHTGVESLKDLIRAVRNARAEVNVAPSKPITILVKTSDSDLEAFFNSNVNYIKRFTNPEHLEIASTIPAPELAMSSVITGAEIFLPLVDLLNVEEELARLEKELAKWQKELDMVGKKLSNERFVANAKPEVVQKEKDKQADYQAKYDVTVARIDEMKKLVK.

The 'HIGH' region signature appears at 46 to 56 (PNVTGKLHLGH). Positions 520-524 (KMSKS) match the 'KMSKS' region motif. Residue K523 coordinates ATP. Residues 809–844 (LVDLLNVEEELARLEKELAKWQKELDMVGKKLSNER) are a coiled coil.

Belongs to the class-I aminoacyl-tRNA synthetase family. ValS type 1 subfamily. Monomer.

It localises to the cytoplasm. It carries out the reaction tRNA(Val) + L-valine + ATP = L-valyl-tRNA(Val) + AMP + diphosphate. Functionally, catalyzes the attachment of valine to tRNA(Val). As ValRS can inadvertently accommodate and process structurally similar amino acids such as threonine, to avoid such errors, it has a 'posttransfer' editing activity that hydrolyzes mischarged Thr-tRNA(Val) in a tRNA-dependent manner. The protein is Valine--tRNA ligase of Streptococcus pneumoniae (strain ATCC BAA-255 / R6).